An 88-amino-acid chain; its full sequence is Alpha-latrotoxin associated low molecular weight protein (88 aa).

The signal sequence occupies residues 1–18; it reads MSKLFFVAFLCLIISVFA.

The protein belongs to the arthropod CHH/MIH/GIH/VIH hormone family. In terms of tissue distribution, expressed by the venom gland.

Its subcellular location is the secreted. Functionally, may increase the toxicity of alpha-latrotoxin and/or other venom components. Is non-toxic to mice and to the cockroach Periplaneta americana. The sequence is that of Alpha-latrotoxin associated low molecular weight protein from Latrodectus hesperus (Western black widow spider).